The chain runs to 177 residues: Large ribosomal subunit protein uL6 (177 aa).

Belongs to the universal ribosomal protein uL6 family. As to quaternary structure, part of the 50S ribosomal subunit.

This protein binds to the 23S rRNA, and is important in its secondary structure. It is located near the subunit interface in the base of the L7/L12 stalk, and near the tRNA binding site of the peptidyltransferase center. This Mannheimia succiniciproducens (strain KCTC 0769BP / MBEL55E) protein is Large ribosomal subunit protein uL6.